The sequence spans 267 residues: Thiamine pyrophosphokinase 3 (267 aa).

It belongs to the thiamine pyrophosphokinase family.

It localises to the cytoplasm. The protein localises to the cytosol. It carries out the reaction thiamine + ATP = thiamine diphosphate + AMP + H(+). Its pathway is cofactor biosynthesis; thiamine diphosphate biosynthesis; thiamine diphosphate from thiamine: step 1/1. Catalyzes the phosphorylation of thiamine to thiamine pyrophosphate (TPP). TPP is an active cofactor for enzymes involved in glycolysis and energy production. Plant leaves require high levels of TPP for photosynthesis and carbohydrate metabolism. The polypeptide is Thiamine pyrophosphokinase 3 (TPK3) (Oryza sativa subsp. japonica (Rice)).